A 100-amino-acid polypeptide reads, in one-letter code: Urease subunit gamma (100 aa).

Belongs to the urease gamma subunit family. Heterotrimer of UreA (gamma), UreB (beta) and UreC (alpha) subunits. Three heterotrimers associate to form the active enzyme.

The protein localises to the cytoplasm. It catalyses the reaction urea + 2 H2O + H(+) = hydrogencarbonate + 2 NH4(+). It functions in the pathway nitrogen metabolism; urea degradation; CO(2) and NH(3) from urea (urease route): step 1/1. This is Urease subunit gamma from Flavobacterium johnsoniae (strain ATCC 17061 / DSM 2064 / JCM 8514 / BCRC 14874 / CCUG 350202 / NBRC 14942 / NCIMB 11054 / UW101) (Cytophaga johnsonae).